Consider the following 378-residue polypeptide: MATDYYAVLGVRRDASQDEIKKAFRRLARELHPDVNPDPKTQERFKEINAAYEVLSDPQKKQVYDLGGDPLSQAAGGGAGGFGAGGFGNFSDIMDAFFGTASQRGPRSRTRRGQDAMIRIEVELDEAAFGTTKDIQVDTAVVCNTCNGEGAAPGTSAQTCDMCRGRGEVSQVTRSFLGQVMTSRPCPQCQGFGTVVPTPCPECAGDGRVRSRRTLTVKIPAGVDNGTRIQLAGEGEVGPGGGPAGDLYVEIHELPHSTFQRRGDDLHCTVTIPMTAAALGTKVPLETLDGMEEVDIRPGTQSGQSIPKHGRGVTHLRGGGRGDLIVHVEVTTPGKLDPEQERLLRELAKLRGEERPTGQFQPGQQGLFSRLKDAFNGR.

Residues 4-68 enclose the J domain; that stretch reads DYYAVLGVRR…QKKQVYDLGG (65 aa). The CR-type zinc-finger motif lies at 130–212; that stretch reads GTTKDIQVDT…CAGDGRVRSR (83 aa). Residues cysteine 143, cysteine 146, cysteine 160, cysteine 163, cysteine 186, cysteine 189, cysteine 200, and cysteine 203 each coordinate Zn(2+). CXXCXGXG motif repeat units lie at residues 143–150, 160–167, 186–193, and 200–207; these read CNTCNGEG, CDMCRGRG, CPQCQGFG, and CPECAGDG. Disordered regions lie at residues 297–319 and 351–378; these read RPGT…LRGG and RGEE…FNGR. Residues 358–367 show a composition bias toward polar residues; it reads GQFQPGQQGL.

It belongs to the DnaJ family. In terms of assembly, homodimer. It depends on Zn(2+) as a cofactor.

Its subcellular location is the cytoplasm. Functionally, participates actively in the response to hyperosmotic and heat shock by preventing the aggregation of stress-denatured proteins and by disaggregating proteins, also in an autonomous, DnaK-independent fashion. Unfolded proteins bind initially to DnaJ; upon interaction with the DnaJ-bound protein, DnaK hydrolyzes its bound ATP, resulting in the formation of a stable complex. GrpE releases ADP from DnaK; ATP binding to DnaK triggers the release of the substrate protein, thus completing the reaction cycle. Several rounds of ATP-dependent interactions between DnaJ, DnaK and GrpE are required for fully efficient folding. Also involved, together with DnaK and GrpE, in the DNA replication of plasmids through activation of initiation proteins. The chain is Chaperone protein DnaJ 2 from Streptomyces coelicolor (strain ATCC BAA-471 / A3(2) / M145).